The following is a 90-amino-acid chain: U7-theraphotoxin-Hhn1a 6 (90 aa).

The N-terminal stretch at 1-19 (MKTAIFTVVLALAVFAVLS) is a signal peptide. Positions 20–50 (FGWEANEKALSEEFTELIHEKEAASEAEARE) are excised as a propeptide. Disulfide bonds link C51–C65, C58–C70, and C64–C81.

This sequence belongs to the neurotoxin 10 (Hwtx-1) family. 13 (Hntx-13) subfamily. As to expression, expressed by the venom gland.

The protein localises to the secreted. Ion channel inhibitor. The polypeptide is U7-theraphotoxin-Hhn1a 6 (Cyriopagopus hainanus (Chinese bird spider)).